The following is a 503-amino-acid chain: Lanosterol 14-alpha demethylase (503 aa).

The helical transmembrane segment at 24 to 44 (GNLLSTLLIACAFTLSLVYLF) threads the bilayer. Heme is bound at residue cysteine 449.

It belongs to the cytochrome P450 family. The cofactor is heme. Ubiquitinated by MARCHF6, leading to proteasomal degradation.

It localises to the endoplasmic reticulum membrane. Its subcellular location is the microsome membrane. The catalysed reaction is a 14alpha-methyl steroid + 3 reduced [NADPH--hemoprotein reductase] + 3 O2 = a Delta(14) steroid + formate + 3 oxidized [NADPH--hemoprotein reductase] + 4 H2O + 4 H(+). It catalyses the reaction lanosterol + 3 reduced [NADPH--hemoprotein reductase] + 3 O2 = 4,4-dimethyl-5alpha-cholesta-8,14,24-trien-3beta-ol + formate + 3 oxidized [NADPH--hemoprotein reductase] + 4 H2O + 4 H(+). The enzyme catalyses 24,25-dihydrolanosterol + 3 reduced [NADPH--hemoprotein reductase] + 3 O2 = 4,4-dimethyl-8,14-cholestadien-3beta-ol + formate + 3 oxidized [NADPH--hemoprotein reductase] + 4 H2O + 4 H(+). It carries out the reaction a 14alpha-methyl steroid + reduced [NADPH--hemoprotein reductase] + O2 = a 14alpha-hydroxymethyl steroid + oxidized [NADPH--hemoprotein reductase] + H2O + H(+). The catalysed reaction is a 14alpha-hydroxymethyl steroid + reduced [NADPH--hemoprotein reductase] + O2 = a 14alpha-formyl steroid + oxidized [NADPH--hemoprotein reductase] + 2 H2O + H(+). It catalyses the reaction a 14alpha-formyl steroid + reduced [NADPH--hemoprotein reductase] + O2 = a Delta(14) steroid + formate + oxidized [NADPH--hemoprotein reductase] + H2O + 2 H(+). The enzyme catalyses lanosterol + reduced [NADPH--hemoprotein reductase] + O2 = 32-hydroxylanosterol + oxidized [NADPH--hemoprotein reductase] + H2O + H(+). It carries out the reaction 32-hydroxylanosterol + reduced [NADPH--hemoprotein reductase] + O2 = 32-oxolanosterol + oxidized [NADPH--hemoprotein reductase] + 2 H2O + H(+). The catalysed reaction is 32-oxolanosterol + reduced [NADPH--hemoprotein reductase] + O2 = 4,4-dimethyl-5alpha-cholesta-8,14,24-trien-3beta-ol + formate + oxidized [NADPH--hemoprotein reductase] + H2O + 2 H(+). It catalyses the reaction 24,25-dihydrolanosterol + reduced [NADPH--hemoprotein reductase] + O2 = 32-hydroxy-24,25-dihydrolanosterol + oxidized [NADPH--hemoprotein reductase] + H2O + H(+). The enzyme catalyses 32-hydroxy-24,25-dihydrolanosterol + reduced [NADPH--hemoprotein reductase] + O2 = 32-oxo-24,25-dihydrolanosterol + oxidized [NADPH--hemoprotein reductase] + 2 H2O + H(+). It carries out the reaction 32-oxo-24,25-dihydrolanosterol + reduced [NADPH--hemoprotein reductase] + O2 = 4,4-dimethyl-8,14-cholestadien-3beta-ol + formate + oxidized [NADPH--hemoprotein reductase] + H2O + 2 H(+). It functions in the pathway steroid biosynthesis; zymosterol biosynthesis; zymosterol from lanosterol: step 1/6. With respect to regulation, inhibited by azalanstat. Inhibited by azole antifungal agents ketoconazole, itraconazole and fluconazole. Sterol 14alpha-demethylase that plays a critical role in the cholesterol biosynthesis pathway, being cholesterol the major sterol component in mammalian membranes as well as a precursor for bile acid and steroid hormone synthesis. Cytochrome P450 monooxygenase that catalyzes the three-step oxidative removal of the 14alpha-methyl group (C-32) of sterols such as lanosterol (lanosta-8,24-dien-3beta-ol) and 24,25-dihydrolanosterol (DHL) in the form of formate, and converts the sterols to 4,4-dimethyl-5alpha-cholesta-8,14,24-trien-3beta-ol and 4,4-dimethyl-8,14-cholestadien-3beta-ol, respectively, which are intermediates of cholesterol biosynthesis. Can also demethylate substrates not intrinsic to mammals, such as eburicol (24-methylene-24,25-dihydrolanosterol), but at a lower rate than DHL. The chain is Lanosterol 14-alpha demethylase from Mus musculus (Mouse).